The following is a 455-amino-acid chain: Adenylyltransferase and sulfurtransferase UBA4 (455 aa).

Residues G93, D114, 121 to 125, K138, and 182 to 183 contribute to the ATP site; these read SNLHR and DH. C224 and C227 together coordinate Zn(2+). C241 functions as the Glycyl thioester intermediate; for adenylyltransferase activity in the catalytic mechanism. Positions 302 and 305 each coordinate Zn(2+). In terms of domain architecture, Rhodanese spans 355-453; that stretch reads QSREHTLIDV…WSEDIDAAFP (99 aa). C413 acts as the Cysteine persulfide intermediate; for sulfurtransferase activity in catalysis.

The protein in the N-terminal section; belongs to the HesA/MoeB/ThiF family. UBA4 subfamily. Zn(2+) is required as a cofactor.

It localises to the cytoplasm. Its subcellular location is the cytosol. The protein operates within tRNA modification; 5-methoxycarbonylmethyl-2-thiouridine-tRNA biosynthesis. In terms of biological role, plays a central role in 2-thiolation of mcm(5)S(2)U at tRNA wobble positions of cytosolic tRNA(Lys), tRNA(Glu) and tRNA(Gln). Acts by mediating the C-terminal thiocarboxylation of sulfur carrier URM1. Its N-terminus first activates URM1 as acyl-adenylate (-COAMP), then the persulfide sulfur on the catalytic cysteine is transferred to URM1 to form thiocarboxylation (-COSH) of its C-terminus. The reaction probably involves hydrogen sulfide that is generated from the persulfide intermediate and that acts as a nucleophile towards URM1. Subsequently, a transient disulfide bond is formed. Does not use thiosulfate as sulfur donor; NFS1 probably acting as a sulfur donor for thiocarboxylation reactions. Prior mcm(5) tRNA modification by the elongator complex is required for 2-thiolation. May also be involved in protein urmylation. The polypeptide is Adenylyltransferase and sulfurtransferase UBA4 (Lodderomyces elongisporus (strain ATCC 11503 / CBS 2605 / JCM 1781 / NBRC 1676 / NRRL YB-4239) (Yeast)).